We begin with the raw amino-acid sequence, 469 residues long: MKAMEGKIIQVLGPVVDVEFESYLPAIFEALDINFEVNGVQKSLVLEVAAHLGGNRVRAIAMDMTEGLVRNQVIKARGKMIEVPVGEEVLGRIFNVVGESIDNLEPLKPSLTWPIHRKAPSFEQQSTKTEMFETGIKVIDLLAPYSKGGKVGLFGGAGVGKTVIIMELIHNVAYKHNGYSVFAGVGERTREGNDLYFEMKEGGVLDKVALCYGQMNEPPGARNRIAFTGLTMAEYFRDEKGLDVLMFIDNIFRYAQSGAEMSALLGRIPSAVGYQPTLAGEMGKLQERIASTKNGSITSVQAVYVPADDLTDPAPASVFAHLDATTVLNRKIAEKGIYPAVDPLDSTSRILSPQMIGEKHYEVATGIQQVLQKYKDLQDIIAILGLDELSEEDKKTVERARKIEKFLSQPFFVAEVFTGSPGKYVTLQETLEGFGGILEGKYDHIPENAFYMVGSIQEVLEKAKNMKNS.

155–162 is an ATP binding site; sequence GGAGVGKT.

This sequence belongs to the ATPase alpha/beta chains family. F-type ATPases have 2 components, CF(1) - the catalytic core - and CF(0) - the membrane proton channel. CF(1) has five subunits: alpha(3), beta(3), gamma(1), delta(1), epsilon(1). CF(0) has three main subunits: a(1), b(2) and c(9-12). The alpha and beta chains form an alternating ring which encloses part of the gamma chain. CF(1) is attached to CF(0) by a central stalk formed by the gamma and epsilon chains, while a peripheral stalk is formed by the delta and b chains.

The protein resides in the cell inner membrane. The catalysed reaction is ATP + H2O + 4 H(+)(in) = ADP + phosphate + 5 H(+)(out). Produces ATP from ADP in the presence of a proton gradient across the membrane. The catalytic sites are hosted primarily by the beta subunits. The chain is ATP synthase subunit beta from Helicobacter pylori (strain ATCC 700392 / 26695) (Campylobacter pylori).